A 353-amino-acid polypeptide reads, in one-letter code: Iron(III) enterobactin esterase (353 aa).

This sequence belongs to the Fes family.

It is found in the cytoplasm. The catalysed reaction is Fe(III)-enterobactin + 3 H2O + H(+) = Fe(III)-[N-(2,3-dihydroxybenzoyl)-L-serine] + 2 N-(2,3-dihydroxybenzoyl)-L-serine. It carries out the reaction Fe(III)-enterobactin + H2O = Fe(III)-[N-(2,3-dihydroxybenzoyl)-L-serine]3 + H(+). The enzyme catalyses Fe(III)-[N-(2,3-dihydroxybenzoyl)-L-serine]3 + H2O + H(+) = Fe(III)-[N-(2,3-dihydroxybenzoyl)-L-serine]2 + N-(2,3-dihydroxybenzoyl)-L-serine. It catalyses the reaction Fe(III)-[N-(2,3-dihydroxybenzoyl)-L-serine]2 + H2O + H(+) = Fe(III)-[N-(2,3-dihydroxybenzoyl)-L-serine] + N-(2,3-dihydroxybenzoyl)-L-serine. Its function is as follows. Catalyzes the hydrolysis of ferric enterobactin (Fe-Ent). Is responsible for the release of iron from ferric enterobactin. This Yersinia enterocolitica protein is Iron(III) enterobactin esterase.